We begin with the raw amino-acid sequence, 340 residues long: DNA-directed RNA polymerase subunit alpha (340 aa).

The alpha N-terminal domain (alpha-NTD) stretch occupies residues 1-233; sequence MYRNWRDLIS…EQLSIFINFD (233 aa). The segment at 251–340 is alpha C-terminal domain (alpha-CTD); it reads INENLYRSVD…RLRGERKDEE (90 aa).

The protein belongs to the RNA polymerase alpha chain family. As to quaternary structure, homodimer. The RNAP catalytic core consists of 2 alpha, 1 beta, 1 beta' and 1 omega subunit. When a sigma factor is associated with the core the holoenzyme is formed, which can initiate transcription.

It carries out the reaction RNA(n) + a ribonucleoside 5'-triphosphate = RNA(n+1) + diphosphate. Its function is as follows. DNA-dependent RNA polymerase catalyzes the transcription of DNA into RNA using the four ribonucleoside triphosphates as substrates. The sequence is that of DNA-directed RNA polymerase subunit alpha from Geobacter sulfurreducens (strain ATCC 51573 / DSM 12127 / PCA).